Reading from the N-terminus, the 224-residue chain is 7-cyano-7-deazaguanine synthase (224 aa).

12–22 (LSGGLDSSTVT) is an ATP binding site. Zn(2+) is bound by residues C193, C201, C204, and C207.

It belongs to the QueC family. Requires Zn(2+) as cofactor.

The catalysed reaction is 7-carboxy-7-deazaguanine + NH4(+) + ATP = 7-cyano-7-deazaguanine + ADP + phosphate + H2O + H(+). It participates in purine metabolism; 7-cyano-7-deazaguanine biosynthesis. In terms of biological role, catalyzes the ATP-dependent conversion of 7-carboxy-7-deazaguanine (CDG) to 7-cyano-7-deazaguanine (preQ(0)). This is 7-cyano-7-deazaguanine synthase from Prochlorococcus marinus (strain MIT 9312).